The following is a 146-amino-acid chain: Ferredoxin-thioredoxin reductase catalytic chain, chloroplastic (146 aa).

A chloroplast-targeting transit peptide spans 1 to 31 (MNLQAVSCSFGFLSSPLGVTPRTSFRRFVIR). Cys-85 lines the [4Fe-4S] cluster pocket. Cys-87 acts as the Nucleophile in catalysis. Cys-87 and Cys-117 are oxidised to a cystine. Cys-104, Cys-106, and Cys-115 together coordinate [4Fe-4S] cluster.

Belongs to the ferredoxin thioredoxin reductase beta subunit family. In terms of assembly, heterodimer of subunit A (variable subunit) and subunit B (catalytic subunit). Heterodimeric FTR forms a complex with ferredoxin and thioredoxin. It depends on [4Fe-4S] cluster as a cofactor.

Its subcellular location is the plastid. The protein localises to the chloroplast. It carries out the reaction [thioredoxin]-disulfide + 2 reduced [2Fe-2S]-[ferredoxin] + 2 H(+) = [thioredoxin]-dithiol + 2 oxidized [2Fe-2S]-[ferredoxin]. Functionally, catalytic subunit of the ferredoxin-thioredoxin reductase (FTR), which catalyzes the two-electron reduction of thioredoxins by the electrons provided by reduced ferredoxin. This Arabidopsis thaliana (Mouse-ear cress) protein is Ferredoxin-thioredoxin reductase catalytic chain, chloroplastic.